A 399-amino-acid polypeptide reads, in one-letter code: UDP-N-acetylglucosamine--N-acetylmuramyl-(pentapeptide) pyrophosphoryl-undecaprenol N-acetylglucosamine transferase (399 aa).

UDP-N-acetyl-alpha-D-glucosamine-binding positions include 29 to 31, Asn-148, Arg-185, Ser-219, and Gln-318; that span reads TAG.

It belongs to the glycosyltransferase 28 family. MurG subfamily.

It is found in the cell membrane. The enzyme catalyses di-trans,octa-cis-undecaprenyl diphospho-N-acetyl-alpha-D-muramoyl-L-alanyl-D-glutamyl-meso-2,6-diaminopimeloyl-D-alanyl-D-alanine + UDP-N-acetyl-alpha-D-glucosamine = di-trans,octa-cis-undecaprenyl diphospho-[N-acetyl-alpha-D-glucosaminyl-(1-&gt;4)]-N-acetyl-alpha-D-muramoyl-L-alanyl-D-glutamyl-meso-2,6-diaminopimeloyl-D-alanyl-D-alanine + UDP + H(+). It functions in the pathway cell wall biogenesis; peptidoglycan biosynthesis. Cell wall formation. Catalyzes the transfer of a GlcNAc subunit on undecaprenyl-pyrophosphoryl-MurNAc-pentapeptide (lipid intermediate I) to form undecaprenyl-pyrophosphoryl-MurNAc-(pentapeptide)GlcNAc (lipid intermediate II). The chain is UDP-N-acetylglucosamine--N-acetylmuramyl-(pentapeptide) pyrophosphoryl-undecaprenol N-acetylglucosamine transferase from Mycobacterium ulcerans (strain Agy99).